Here is a 566-residue protein sequence, read N- to C-terminus: uncharacterized protein (566 aa).

This is an uncharacterized protein from Escherichia coli (strain K12).